Here is a 199-residue protein sequence, read N- to C-terminus: Charged multivesicular body protein 1b (199 aa).

The stretch at 26 to 48 forms a coiled coil; it reads DKEEKAEKAKIKKAIQKGNMEVA. Residues 132–156 form an interaction with IST1 region; the sequence is MEDTMSSTTTLTTPQNQVDMLLQEM. Positions 167 to 199 are disordered; the sequence is ELPQGQTGSVGTSVASAEQDELSQRLARLRDQV. Residues 170–182 are compositionally biased toward polar residues; sequence QGQTGSVGTSVAS. An interaction with SPAST region spans residues 174-199; sequence GSVGTSVASAEQDELSQRLARLRDQV. The stretch at 178-199 forms a coiled coil; the sequence is TSVASAEQDELSQRLARLRDQV. The interval 180–196 is interaction with VPS4A, MITD1 and STAMBP; the sequence is VASAEQDELSQRLARLR. Positions 180–199 are interaction with VTA1; the sequence is VASAEQDELSQRLARLRDQV. The segment at 183–199 is interaction with VPS4B; the sequence is AEQDELSQRLARLRDQV. The MIT-interacting motif signature appears at 186-196; that stretch reads DELSQRLARLR.

This sequence belongs to the SNF7 family. In terms of assembly, probable peripherally associated component of the endosomal sorting required for transport complex III (ESCRT-III). ESCRT-III components are thought to multimerize to form a flat lattice on the perimeter membrane of the endosome. Several assembly forms of ESCRT-III may exist that interact and act sequentially. Interacts with CHMP1A. Interacts with VTA1; the interaction probably involves the open conformation of CHMP1B. Interacts with CHMP2A. Interacts with VPS4A; the interaction is direct. Interacts with VPS4B; the interaction is direct. Interacts with SPAST (via MIT domain); the interaction is direct. Interacts with IST1. Interacts with MITD1. Interacts with STAMBP. In terms of tissue distribution, widely expressed. Expressed in pancreas, kidney, skeletal muscle, liver, lung, placenta and brain.

The protein resides in the cytoplasm. The protein localises to the cytosol. It localises to the endosome. Its subcellular location is the late endosome membrane. Probable peripherally associated component of the endosomal sorting required for transport complex III (ESCRT-III) which is involved in multivesicular bodies (MVBs) formation and sorting of endosomal cargo proteins into MVBs. MVBs contain intraluminal vesicles (ILVs) that are generated by invagination and scission from the limiting membrane of the endosome and mostly are delivered to lysosomes enabling degradation of membrane proteins, such as stimulated growth factor receptors, lysosomal enzymes and lipids. The MVB pathway appears to require the sequential function of ESCRT-O, -I,-II and -III complexes. ESCRT-III proteins mostly dissociate from the invaginating membrane before the ILV is released. The ESCRT machinery also functions in topologically equivalent membrane fission events, such as the terminal stages of cytokinesis and the budding of enveloped viruses (HIV-1 and other lentiviruses). ESCRT-III proteins are believed to mediate the necessary vesicle extrusion and/or membrane fission activities, possibly in conjunction with the AAA ATPase VPS4. Involved in cytokinesis. Involved in recruiting VPS4A and/or VPS4B and SPAST to the midbody of dividing cells. Involved in HIV-1 p6- and p9-dependent virus release. This is Charged multivesicular body protein 1b (CHMP1B) from Homo sapiens (Human).